The chain runs to 396 residues: MNLIKMSDIDLSGKRVLIREDLNVPIKDGMITSDQRLQAALPTIKSALDSGAAVIVLSHLGRPEEGKYEKKFSLEPVADYLRENLEYPVRFVKDYLTGVDVNPGELVVCENVRFNPGEKGNDEALAKKLASLCDVFVMDAFGTAHRAQASTYGVAQYAPVAVAGPLLIRELEALNQVLKAPKKPIVAIVGGAKVSSKLSLLKQLVGMVDVLIPGGGIANTFLKAQGFEIGISLYEPDLLDEARHILILAKEKGCQIPLPTDVVVGKTFSETCPAFNKSLSNVAADDMILDIGPETIRDYVDLIHEANTIIWNGPVGVFEFPQFAYGTRAIAIAIAESDAFSIAGGGDTLAAVDLYDLNQQISYISTGGGAFLECLEGKTLPAVAILQERAKHVKTN.

Substrate contacts are provided by residues 21–23 (DLN), R36, 59–62 (HLGR), R113, and R146. Residues K197, E319, and 345–348 (GGDT) each bind ATP.

The protein belongs to the phosphoglycerate kinase family. As to quaternary structure, monomer.

It localises to the cytoplasm. It catalyses the reaction (2R)-3-phosphoglycerate + ATP = (2R)-3-phospho-glyceroyl phosphate + ADP. The protein operates within carbohydrate degradation; glycolysis; pyruvate from D-glyceraldehyde 3-phosphate: step 2/5. This chain is Phosphoglycerate kinase, found in Legionella pneumophila (strain Corby).